Consider the following 598-residue polypeptide: MDHIRNFSIIAHIDHGKSTLADRLIQFTGISDERTFKDQMLDNMDIERERGITIKSQAITLPYQAKDGKTYSLNLIDTPGHVDFSYEVSRALASCEGVLLLIDAAQGVQAQTVANLYLAMEHNLEIIPVINKIDLPSADVERVIEQIDDELGLDSEGHLKCSAKAGIGIQDILEAIVKRVPPPRGNPEAPLAALIFDAHYDPFRGTIIHCRIMEGTVKSGDTIRFMSNSATYRVEEVGHFLLQREKRNCLSAGEVGYIIAGVKTVSDVRTGDTITLDDRPCSQPLPGFREVKPVVFASIYPIASDDYDDLKAALEKYQLNDASFIYQKDSSAALGQGFRCGFLGLLHLEVVQERLEREYDQSIILSVPSVRYRFTLKDGSVVYVDNPAHYPGSSSIELSEEPYIRATLMLPERYLGAVMKLCMEKRGVNSTLNYPSPGRVELLYEMPLAEVIYDFYDRFKSVTQGYGSFDYELIDYRESQLVLLDILVNGERVDALSQIVHRDRARARGLQACERLKEEIPRQMFKIAIQGAIGGEIISRTTITPFRKDVIAKCYGGDISRKRKLLEKQKKGKKRMKMIGQVSIPQSAFLSVLKSDAD.

In terms of domain architecture, tr-type G spans D2–R184. GTP contacts are provided by residues D14–T19 and N131–D134.

The protein belongs to the TRAFAC class translation factor GTPase superfamily. Classic translation factor GTPase family. LepA subfamily.

It localises to the cell inner membrane. The enzyme catalyses GTP + H2O = GDP + phosphate + H(+). Functionally, required for accurate and efficient protein synthesis under certain stress conditions. May act as a fidelity factor of the translation reaction, by catalyzing a one-codon backward translocation of tRNAs on improperly translocated ribosomes. Back-translocation proceeds from a post-translocation (POST) complex to a pre-translocation (PRE) complex, thus giving elongation factor G a second chance to translocate the tRNAs correctly. Binds to ribosomes in a GTP-dependent manner. The polypeptide is Elongation factor 4 (Syntrophus aciditrophicus (strain SB)).